The primary structure comprises 851 residues: Envelope glycoprotein gp160 (851 aa).

An N-terminal signal peptide occupies residues methionine 1–glutamine 24. The Extracellular segment spans residues tyrosine 25–tyrosine 669. N-linked (GlcNAc...) asparagine; by host glycosylation is present at asparagine 37. Residues cysteine 44 and cysteine 57 are joined by a disulfide bond. 23 N-linked (GlcNAc...) asparagine; by host glycosylation sites follow: asparagine 70, asparagine 114, asparagine 127, asparagine 134, asparagine 142, asparagine 157, asparagine 184, asparagine 195, asparagine 227, asparagine 230, asparagine 261, asparagine 267, asparagine 278, asparagine 289, asparagine 299, asparagine 355, asparagine 361, asparagine 388, asparagine 398, asparagine 401, asparagine 438, asparagine 453, and asparagine 456. 5 cysteine pairs are disulfide-bonded: cysteine 101-cysteine 203, cysteine 108-cysteine 194, cysteine 113-cysteine 154, cysteine 216-cysteine 246, and cysteine 226-cysteine 238. Positions cysteine 113–glutamate 153 are V1. The tract at residues cysteine 154–cysteine 194 is V2. The segment at cysteine 294–tryptophan 327 is V3. Cysteine 294 and cysteine 328 are oxidised to a cystine. 2 cysteine pairs are disulfide-bonded: cysteine 380/cysteine 437 and cysteine 387/cysteine 410. The V4 stretch occupies residues cysteine 387–cysteine 410. A V5 region spans residues asparagine 453–phenylalanine 459. The interval glycine 502–alanine 522 is fusion peptide. The interval leucine 565 to glutamine 581 is immunosuppression. 3 N-linked (GlcNAc...) asparagine; by host glycosylation sites follow: asparagine 601, asparagine 610, and asparagine 626. An MPER; binding to GalCer region spans residues lysine 647–glutamine 668. The chain crosses the membrane as a helical span at residues glycine 670 to leucine 690. The Cytoplasmic portion of the chain corresponds to serine 691–leucine 851. The short motif at tyrosine 697 to valine 700 is the YXXV motif; contains endocytosis signal element. Cysteine 763 carries the S-palmitoyl cysteine; by host lipid modification. Positions leucine 850 to leucine 851 match the Di-leucine internalization motif motif.

The mature envelope protein (Env) consists of a homotrimer of non-covalently associated gp120-gp41 heterodimers. The resulting complex protrudes from the virus surface as a spike. There seems to be as few as 10 spikes on the average virion. Interacts with human CD4, CCR5 and CXCR4, to form a P4HB/PDI-CD4-CXCR4-gp120 complex. Gp120 also interacts with the C-type lectins CD209/DC-SIGN and CLEC4M/DC-SIGNR (collectively referred to as DC-SIGN(R)). Gp120 and gp41 interact with GalCer. In terms of assembly, the mature envelope protein (Env) consists of a homotrimer of non-covalently associated gp120-gp41 heterodimers. The resulting complex protrudes from the virus surface as a spike. There seems to be as few as 10 spikes on the average virion. Post-translationally, specific enzymatic cleavages in vivo yield mature proteins. Envelope glycoproteins are synthesized as an inactive precursor that is heavily N-glycosylated and processed likely by host cell furin in the Golgi to yield the mature SU and TM proteins. The cleavage site between SU and TM requires the minimal sequence [KR]-X-[KR]-R. In terms of processing, palmitoylation of the transmembrane protein and of Env polyprotein (prior to its proteolytic cleavage) is essential for their association with host cell membrane lipid rafts. Palmitoylation is therefore required for envelope trafficking to classical lipid rafts, but not for viral replication.

The protein resides in the virion membrane. Its subcellular location is the host cell membrane. It localises to the host endosome membrane. Its function is as follows. The surface protein gp120 (SU) attaches the virus to the host lymphoid cell by binding to the primary receptor CD4. This interaction induces a structural rearrangement creating a high affinity binding site for a chemokine coreceptor like CXCR4 and/or CCR5. This peculiar 2 stage receptor-interaction strategy allows gp120 to maintain the highly conserved coreceptor-binding site in a cryptic conformation, protected from neutralizing antibodies. Since CD4 also displays a binding site for the disulfide-isomerase P4HB/PDI, a P4HB/PDI-CD4-CXCR4-gp120 complex may form. In that complex, P4HB/PDI could reach and reduce gp120 disulfide bonds, causing major conformational changes in gp120. TXN, another PDI family member could also be involved in disulfide rearrangements in Env during fusion. These changes are transmitted to the transmembrane protein gp41 and are thought to activate its fusogenic potential by unmasking its fusion peptide. In terms of biological role, the surface protein gp120 is a ligand for CD209/DC-SIGN and CLEC4M/DC-SIGNR, which are respectively found on dendritic cells (DCs), and on endothelial cells of liver sinusoids and lymph node sinuses. These interactions allow capture of viral particles at mucosal surfaces by these cells and subsequent transmission to permissive cells. DCs are professional antigen presenting cells, critical for host immunity by inducing specific immune responses against a broad variety of pathogens. They act as sentinels in various tissues where they take up antigen, process it, and present it to T-cells following migration to lymphoid organs. HIV subverts the migration properties of dendritic cells to gain access to CD4+ T-cells in lymph nodes. Virus transmission to permissive T-cells occurs either in trans (without DCs infection, through viral capture and transmission), or in cis (following DCs productive infection, through the usual CD4-gp120 interaction), thereby inducing a robust infection. In trans infection, bound virions remain infectious over days and it is proposed that they are not degraded, but protected in non-lysosomal acidic organelles within the DCs close to the cell membrane thus contributing to the viral infectious potential during DCs' migration from the periphery to the lymphoid tissues. On arrival at lymphoid tissues, intact virions recycle back to DCs' cell surface allowing virus transmission to CD4+ T-cells. Virion capture also seems to lead to MHC-II-restricted viral antigen presentation, and probably to the activation of HIV-specific CD4+ cells. Functionally, the transmembrane protein gp41 (TM) acts as a class I viral fusion protein. Under the current model, the protein has at least 3 conformational states: pre-fusion native state, pre-hairpin intermediate state, and post-fusion hairpin state. During fusion of viral and target intracellular membranes, the coiled coil regions (heptad repeats) assume a trimer-of-hairpins structure, positioning the fusion peptide in close proximity to the C-terminal region of the ectodomain. The formation of this structure appears to drive apposition and subsequent fusion of viral and target cell membranes. Complete fusion occurs in host cell endosomes and is dynamin-dependent, however some lipid transfer might occur at the plasma membrane. The virus undergoes clathrin-dependent internalization long before endosomal fusion, thus minimizing the surface exposure of conserved viral epitopes during fusion and reducing the efficacy of inhibitors targeting these epitopes. Membranes fusion leads to delivery of the nucleocapsid into the cytoplasm. The envelope glycoprotein gp160 precursor down-modulates cell surface CD4 antigen by interacting with it in the endoplasmic reticulum and blocking its transport to the cell surface. Its function is as follows. The gp120-gp41 heterodimer seems to contribute to T-cell depletion during HIV-1 infection. The envelope glycoproteins expressed on the surface of infected cells induce apoptosis through an interaction with uninfected cells expressing the receptor (CD4) and the coreceptors CXCR4 or CCR5. This type of bystander killing may be obtained by at least three distinct mechanisms. First, the interaction between the 2 cells can induce cellular fusion followed by nuclear fusion within the syncytium. Syncytia are condemned to die from apoptosis. Second, the 2 interacting cells may not fuse entirely and simply exchange plasma membrane lipids, after a sort of hemifusion process, followed by rapid death. Third, it is possible that virus-infected cells, on the point of undergoing apoptosis, fuse with CD4-expressing cells, in which case apoptosis is rapidly transmitted from one cell to the other and thus occurs in a sort of contagious fashion. In terms of biological role, the gp120-gp41 heterodimer allows rapid transcytosis of the virus through CD4 negative cells such as simple epithelial monolayers of the intestinal, rectal and endocervical epithelial barriers. Both gp120 and gp41 specifically recognize glycosphingolipids galactosyl-ceramide (GalCer) or 3' sulfo-galactosyl-ceramide (GalS) present in the lipid rafts structures of epithelial cells. Binding to these alternative receptors allows the rapid transcytosis of the virus through the epithelial cells. This transcytotic vesicle-mediated transport of virions from the apical side to the basolateral side of the epithelial cells does not involve infection of the cells themselves. This is Envelope glycoprotein gp160 (env) from Human immunodeficiency virus type 2 subtype A (isolate D194) (HIV-2).